The chain runs to 877 residues: MNEKYAALKSNVSMLGHLLGNTIQEAHGDEILEKVETIRKLSKSARAGNQADRNNLIEEIKSLPDEQLTPVARAFNQFLNLTNIAEQYHTISRHCDAHVCEPDAINTLFAKLGQNGINKLDTAQAIRELNIELVLTAHPTEITRRTMINKLVKINECLSKLELSDLSYKERHKTEKRLEQLIAQSWHSDVIRKQRPTPLDEAKWGFAVVENSLWEAVPDFLRELDEKLKDYLDQGLPIDARPVHFSSWMGGDRDGNPFVTHTVTREVLLLSRWKAADLYLKDINELISELSMTKCNDTVRQLAGEDEHEPYRAILKQLRTLLSDTKEILDAKINGQKLAVKAPLQSVEQLWDPLFACYQSLRECGMSMIAEGSLLDTLRRVKAFGVHLVRLDIRQESTRHADVLSELTRYLGIGDYNHWSEQDKIAFLTNELASKRPLLPRDWQPSEQVKEVLDTCKIIAAQSREAFGAYVISMAKTASDVLAVHLLLQESGCPYRMDVCPLFETLDDLNNAEAVIKQLMSIDLYRGFIQNHQMVMIGYSDSAKDAGVMAAGWAQYHAMEALVNVAEQEGIELTLFHGRGGTIGRGGAPAHAALLSQPPKSLKGGLRVTEQGEMIRFKLGLPDVAVNSFNMYASAILEANLLPPPEPKQEWRDLMEVLSQVSCEAYRSVVRGEPDFVPYFRQATPELELGKLPLGSRPAKRNPNGGVESLRAIPWIFSWSQNRLLLPAWLGAGEAIQYSIDKGHQALLEEMCREWPFFSTRLGMLEMVYLKCNSEISRYYDERLADKSLLPLGDRLRDQLQSDIKAVLNVENNENLMQSDPWGQESIRLRNIYIEPLNMLQAELLYRTRQAGVVSEALEEALMVTIAGIAAGMRNTG.

Residues histidine 138 and lysine 544 contribute to the active site.

The protein belongs to the PEPCase type 1 family. It depends on Mg(2+) as a cofactor.

It carries out the reaction oxaloacetate + phosphate = phosphoenolpyruvate + hydrogencarbonate. In terms of biological role, forms oxaloacetate, a four-carbon dicarboxylic acid source for the tricarboxylic acid cycle. This Vibrio vulnificus (strain CMCP6) protein is Phosphoenolpyruvate carboxylase.